Here is a 250-residue protein sequence, read N- to C-terminus: 2,3-bisphosphoglycerate-dependent phosphoglycerate mutase (250 aa).

Residues 10–17, 23–24, Arg62, 89–92, Lys100, 116–117, and 185–186 contribute to the substrate site; these read RHGESQWN, TG, ERHY, RR, and GN. His11 serves as the catalytic Tele-phosphohistidine intermediate. Residue Glu89 is the Proton donor/acceptor of the active site.

This sequence belongs to the phosphoglycerate mutase family. BPG-dependent PGAM subfamily. Homodimer.

It carries out the reaction (2R)-2-phosphoglycerate = (2R)-3-phosphoglycerate. The protein operates within carbohydrate degradation; glycolysis; pyruvate from D-glyceraldehyde 3-phosphate: step 3/5. Its function is as follows. Catalyzes the interconversion of 2-phosphoglycerate and 3-phosphoglycerate. This chain is 2,3-bisphosphoglycerate-dependent phosphoglycerate mutase, found in Escherichia coli O139:H28 (strain E24377A / ETEC).